Reading from the N-terminus, the 182-residue chain is Large ribosomal subunit protein uL16 (182 aa).

It belongs to the universal ribosomal protein uL16 family.

The polypeptide is Large ribosomal subunit protein uL16 (Pyrobaculum islandicum (strain DSM 4184 / JCM 9189 / GEO3)).